The chain runs to 188 residues: Adenine phosphoribosyltransferase (188 aa).

It belongs to the purine/pyrimidine phosphoribosyltransferase family. Homodimer.

It localises to the cytoplasm. It carries out the reaction AMP + diphosphate = 5-phospho-alpha-D-ribose 1-diphosphate + adenine. The protein operates within purine metabolism; AMP biosynthesis via salvage pathway; AMP from adenine: step 1/1. Functionally, catalyzes a salvage reaction resulting in the formation of AMP, that is energically less costly than de novo synthesis. The protein is Adenine phosphoribosyltransferase of Paraburkholderia phytofirmans (strain DSM 17436 / LMG 22146 / PsJN) (Burkholderia phytofirmans).